The chain runs to 372 residues: Glutamate 5-kinase (372 aa).

Residue Lys14 participates in ATP binding. Substrate contacts are provided by Ser54, Asp141, and Asn153. Position 173-174 (173-174 (TD)) interacts with ATP. The PUA domain maps to 280–358 (RGHVVIDAGA…GEIETVLGYM (79 aa)).

The protein belongs to the glutamate 5-kinase family.

The protein resides in the cytoplasm. The catalysed reaction is L-glutamate + ATP = L-glutamyl 5-phosphate + ADP. It functions in the pathway amino-acid biosynthesis; L-proline biosynthesis; L-glutamate 5-semialdehyde from L-glutamate: step 1/2. Functionally, catalyzes the transfer of a phosphate group to glutamate to form L-glutamate 5-phosphate. This chain is Glutamate 5-kinase, found in Burkholderia ambifaria (strain ATCC BAA-244 / DSM 16087 / CCUG 44356 / LMG 19182 / AMMD) (Burkholderia cepacia (strain AMMD)).